A 362-amino-acid chain; its full sequence is Serine/threonine-protein kinase SRK2E (362 aa).

Phosphoserine; by autocatalysis occurs at positions 7, 18, 29, and 43. One can recognise a Protein kinase domain in the interval 21 to 277 (YELVKDIGSG…IPEIRNHEWF (257 aa)). 27 to 35 (IGSGNFGVA) provides a ligand contact to ATP. K50 contacts ATP. D140 (proton acceptor) is an active-site residue. Residues 160–186 (DFGYSKSSVLHSQPKSTVGTPAYIAPE) are activation loop. S175 carries the post-translational modification Phosphoserine. The domain I; osmotic stress response, required for the kinase activity stretch occupies residues 283 to 318 (ADLMNDNTMTTQFDESDQPGQSIEEIMQIIAEATVP). The tract at residues 319–362 (PAGTQNLNHYLTGSLDIDDDMEEDLESDLDDLDIDSSGEIVYAM) is domain II; ABA response and ABI1 binding.

Belongs to the protein kinase superfamily. Ser/Thr protein kinase family. As to quaternary structure, interacts with ABI1, PP2CA and SLAC1. Interacts with B'ALPHA, B'BETA, B'DELTA, PP2AA2, PP2AA3, PP2A1 and PP2A2. Associates with MAPKKK18 within the nucleus. Interacts with I-2, TOPP1 and TOPP2. Interacts with ABI2. In terms of processing, autophosphorylation on residues Ser-7, Ser-18, Ser-29, Ser-43, Ser-175 and/or Thr-176. Only the phosphorylation of Ser-175 is crucial for the kinase activity. The phosphorylation of Ser-43 may repress the ABA signaling pathway in absence of ABA. Expressed in seedlings, leaves, flowers, stems, and roots, but restricted to guard cells and vascular tissue.

The protein localises to the nucleus. The catalysed reaction is L-seryl-[protein] + ATP = O-phospho-L-seryl-[protein] + ADP + H(+). It carries out the reaction L-threonyl-[protein] + ATP = O-phospho-L-threonyl-[protein] + ADP + H(+). Its activity is regulated as follows. Kinase activity enhanced by ABA and low humidity. Repressed by PP2CA independently of its phosphatase activity. Probably inactivated by ABI1. Repressed by TOPP1. Negatively regulated by ABI2. In terms of biological role, activator of the abscisic acid (ABA) signaling pathway that regulates numerous ABA responses, such as stomata closure in response to drought, darkness, high CO(2), plant pathogens, or decreases in atmospheric relative humidity (RH). Involved in the resistance to drought by avoiding water loss. Required for the stomata closure mediated by pathogen-associated molecular pattern (PAMPs) (e.g. flg22 and LPS) of pathogenic bacteria such as P.syringae pv. tomato (Pst) and E.coli O157:H7. As a plant defense process, stomata are closed transiently in order to limit invaders, but actively reopened by bacteria after a few hours; virulent strains (e.g. Pst DC3000) are more efficient than avirulent strains (e.g. Pst DC3000 AvrRpt2) in reopening stomata. Mediates the phosphorylation and activation of the S-type anion efflux channel SLAC1, and thus promotes stomata closure. Essential for stomatal closure in response to reactive oxygen species (ROS). Promotes MAPKKK18 activity upon abscisic acid (ABA) treatment. This is Serine/threonine-protein kinase SRK2E from Arabidopsis thaliana (Mouse-ear cress).